The sequence spans 216 residues: Phosphatidylserine decarboxylase proenzyme (216 aa).

Ser-185 acts as the Schiff-base intermediate with substrate; via pyruvic acid in catalysis. At Ser-185 the chain carries Pyruvic acid (Ser); by autocatalysis.

The protein belongs to the phosphatidylserine decarboxylase family. PSD-A subfamily. As to quaternary structure, heterodimer of a large membrane-associated beta subunit and a small pyruvoyl-containing alpha subunit. Requires pyruvate as cofactor. Post-translationally, is synthesized initially as an inactive proenzyme. Formation of the active enzyme involves a self-maturation process in which the active site pyruvoyl group is generated from an internal serine residue via an autocatalytic post-translational modification. Two non-identical subunits are generated from the proenzyme in this reaction, and the pyruvate is formed at the N-terminus of the alpha chain, which is derived from the carboxyl end of the proenzyme. The post-translation cleavage follows an unusual pathway, termed non-hydrolytic serinolysis, in which the side chain hydroxyl group of the serine supplies its oxygen atom to form the C-terminus of the beta chain, while the remainder of the serine residue undergoes an oxidative deamination to produce ammonia and the pyruvoyl prosthetic group on the alpha chain.

The protein localises to the cell membrane. It carries out the reaction a 1,2-diacyl-sn-glycero-3-phospho-L-serine + H(+) = a 1,2-diacyl-sn-glycero-3-phosphoethanolamine + CO2. It functions in the pathway phospholipid metabolism; phosphatidylethanolamine biosynthesis; phosphatidylethanolamine from CDP-diacylglycerol: step 2/2. Catalyzes the formation of phosphatidylethanolamine (PtdEtn) from phosphatidylserine (PtdSer). This is Phosphatidylserine decarboxylase proenzyme from Nitrosomonas eutropha (strain DSM 101675 / C91 / Nm57).